The following is a 201-amino-acid chain: Fimbrial protein FimX (201 aa).

Residues methionine 1 to alanine 21 form the signal peptide. A disulfide bridge connects residues cysteine 37 and cysteine 79.

Belongs to the fimbrial protein family.

Its subcellular location is the fimbrium. Its function is as follows. Bordetella pertussis is the causative agent of whooping cough. An essential step in the disease process is the attachment of the bacteria to the ciliated epithelium of the respiratory tract, enabling the organism to resist normal host-clearance mechanisms. It is unclear which bacterial cell surface component are responsible for adherence but the fimbriae of B.pertussis are prime candidates for being involved in this process. In Bordetella pertussis (strain Tohama I / ATCC BAA-589 / NCTC 13251), this protein is Fimbrial protein FimX (fimX).